The following is a 404-amino-acid chain: Zinc finger CCCH domain-containing protein 15 homolog (404 aa).

Pro residues predominate over residues 1–10 (MPPKKAPPGP). The tract at residues 1–71 (MPPKKAPPGP…KRKEEKEKKL (71 aa)) is disordered. Over residues 12 to 28 (KKTEQKKKEKVIEDKTF) the composition is skewed to basic and acidic residues. Residues 38–50 (QQKFIQQVQKQVQ) show a composition bias toward low complexity. A compositionally biased stretch (basic and acidic residues) spans 56–71 (PRQDGDKRKEEKEKKL). C3H1-type zinc fingers lie at residues 94-121 (DPKS…HDLS) and 165-202 (PTTD…HALP). Threonine 218 carries the post-translational modification Phosphothreonine. Serine 221 is modified (phosphoserine). The stretch at 246–270 (LAWKKRKIAEKKAKLAAEEERKKSD) forms a coiled coil. Composition is skewed to low complexity over residues 352–361 (EAAKTAAAED) and 369–380 (PSSSAPANDAAP). Positions 352–380 (EAAKTAAAEDAAADEDGPSSSAPANDAAP) are disordered.

This sequence belongs to the ZC3H15/TMA46 family.

The protein is Zinc finger CCCH domain-containing protein 15 homolog of Drosophila melanogaster (Fruit fly).